The primary structure comprises 151 residues: Transcriptional regulator MraZ (151 aa).

SpoVT-AbrB domains follow at residues 5-51 (AHEL…PVAE) and 81-124 (AEIL…GREQ).

The protein belongs to the MraZ family. As to quaternary structure, forms oligomers.

The protein localises to the cytoplasm. It is found in the nucleoid. The protein is Transcriptional regulator MraZ of Neisseria meningitidis serogroup C / serotype 2a (strain ATCC 700532 / DSM 15464 / FAM18).